The sequence spans 322 residues: Mitochondrial uncoupling protein 4 (322 aa).

Solcar repeat units lie at residues 20–114 (SKFL…LREV), 124–216 (YPLW…VKHY), and 225–316 (DNIS…IREM). The next 6 membrane-spanning stretches (helical) occupy residues 22-39 (FLLSGCAATVAELATFPL), 87-108 (WQGVTPAIYRHVVYSGGRMVTY), 126-143 (LWKSVIGGMMAGVIGQFL), 194-211 (PNIQRAALVNMGDLTTYD), 228-247 (STHGLSSLCSGLVASILGTP), and 287-310 (SLYKGFLPSWLRMTPWSMVFWLTY).

Belongs to the mitochondrial carrier (TC 2.A.29) family. In terms of assembly, homotetramer.

The protein resides in the mitochondrion inner membrane. Its subcellular location is the cell projection. It is found in the neuron projection. The catalysed reaction is H(+)(in) = H(+)(out). The enzyme catalyses chloride(in) = chloride(out). In terms of biological role, facilitates proton transport across the inner mitochondrial membrane and may dissipate excessive proton gradient associated with oxidative and metabolic stress at neuronal synapses. Regulates glutamate-induced proton conductance in astrocytes, shifting the energy metabolism toward aerobic glycolysis and lactate transfer to neurons for ATP synthesis. Can transport chloride ions with lower efficiency. The transport mechanism remains to be elucidated. This Mus musculus (Mouse) protein is Mitochondrial uncoupling protein 4.